Here is a 119-residue protein sequence, read N- to C-terminus: Phytosulfokines 2 (119 aa).

A signal peptide spans 1–34; it reads MSTTRGVSSSSAAAALALLLLFALCFFSFHFAAA. The propeptide occupies 35 to 109; the sequence is ARAVPRDEHQ…RRLLSDAHLD (75 aa). Residues tyrosine 110 and tyrosine 112 each carry the sulfotyrosine modification. Residues 115–119 constitute a propeptide that is removed on maturation; it reads HKNKP.

This sequence belongs to the phytosulfokine family. In terms of processing, sulfation is important for activity and for the binding to a putative membrane receptor. PSK-alpha is produced by endopeptidase digestion. PSK-beta is produced from PSK-alpha by exopeptidase digestion.

It localises to the secreted. Its function is as follows. Promotes plant cell differentiation, organogenesis and somatic embryogenesis as well as cell proliferation. The protein is Phytosulfokines 2 (PSK2) of Oryza sativa subsp. japonica (Rice).